Consider the following 709-residue polypeptide: SH3 domain-containing kinase-binding protein 1 (709 aa).

SH3 domains follow at residues 1–58 (MVEA…EIKK) and 98–157 (RRRR…ELSG). Residues S156, S159, S227, and S274 each carry the phosphoserine modification. Residues 221–239 (ETTGSESDGGDSSSTKSEG) show a composition bias toward low complexity. Residues 221-242 (ETTGSESDGGDSSSTKSEGANG) are disordered. Disordered stretches follow at residues 289-309 (GKKLPPATSTPDPSKTEMDSR), 372-485 (SDFD…KIDL), and 511-650 (DSVI…VSSQ). T298 carries the phosphothreonine modification. In terms of domain architecture, SH3 3 spans 311-372 (KTKDYCKVIF…PDNFVKLLPS (62 aa)). Residues 399-434 (TERKHEIKKIPPERPETLPNRTEEKERPEREPKLDL) are compositionally biased toward basic and acidic residues. Position 480 is a phosphoserine (S480). Residues 513–528 (VISSTEKLSHPTTSRP) show a composition bias toward polar residues. Residues 535-554 (PPSQSLTSSSLSSPDIFDSP) show a composition bias toward low complexity. A phosphoserine mark is found at S553, S555, and S565. The span at 561-575 (EEHISLAHRGIDVSK) shows a compositional bias: basic and acidic residues. Over residues 579–592 (KTVTISQVSDNKTS) the composition is skewed to polar residues. The span at 600 to 623 (MAAASSGPASLSSVASSPMSSSLG) shows a compositional bias: low complexity. Residues 627-636 (QRASSPSLFS) show a composition bias toward polar residues. Residue S631 is modified to Phosphoserine. The stretch at 646-708 (AVSSQAAIEE…VNDIKKALQS (63 aa)) forms a coiled coil.

As to quaternary structure, can self-associate and form homotetramers. Interacts with CD2, F-actin capping protein, PIK3R3, GRB2, EGFR, MET, BLNK, MAP3K4, PDCD6IP, SPRY2, ARHGAP17, ARHGAP27, CRK, BCAR1, SOS1, ASAP1, ARAP3, HIP1R, SYNJ2, INPP5D and STAP1. Interacts with E3 ubiquitin-protein ligase CBL. Interacts with CBLB, but does not interact with CBLC. Two molecules of SH3KBP1 seem to bind through their respective SH3 1 domain to one molecule of CBLB. The interaction with CBL or CBLB and EGFR is increased upon EGF stimulation. The interaction with CBL is attenuated by PDCD6IP. Interacts (via SH3 domains) with ARAP1. The interaction is independent of EGF and does not affect ARAP1 GTPase-activating activity but is involved in regulating ubiquitination and endocytic trafficking of EGFR. ARAP1 competes with CBL for binding to SH3KBP1 and prevents interaction of CBL with SH3KBP1; this is likely to regulate SH3KBP1-mediated internalization of EGFR. Interacts through its proline-rich region with the SH3 domain of endophilins SH3GL1, SH3GL2 and SH3GL3. The SH3KBP1-endophilin complex seems to associate with a complex containing the phosphorylated receptor (EGFR or MET) and phosphorylated CBL. Probably associates with ASAP1 and phosphorylated EGFR. Probably part of a complex consisting of at least SH3KBP1, ASAP1 and ARAP3. Interacts with focal adhesion kinases PTK2/FAK1 and PTK2B/PYK2, probably as a dimer. Interacts with DAB2 and probably associates with chathrin through its interaction with DAB2. Part of a complex consisting of SH3KBP1, DAB2, and clathrin heavy chain. DAB2 and clathrin dissociate from SH3KBP1 following growth factor treatment, enabling interaction with CBL. Interacts with DDN and probably associates with MAGI2 through its interaction with DDN. Interacts with the SH3 domains of SRC tyrosine-protein kinases SRC, LCK, LYN, FGR, FYN and HCK. Interacts with TRADD, BIRC2, TRAF1, TRAF2 and TNFR1, and the association with a TNFR1-associated complex upon stimulation with TNF-alpha seems to be mediated by SRC. Probably part of a complex consisting of at least SH3KBP1, ASAP1 and ARAP3. Interacts (via SH3 domains) with SHKBP1 (via PXXXPR motifs). Interacts with ATX2. Interaction with CBL is abolished in the presence of SHKBP1. Interacts (via SH3 domains) with ZFP36 (via extreme C-terminal region). Interacts with MAP3K4; this interaction enhances the association with ZFP36. Post-translationally, monoubiquitinated by CBL and CBLB after EGF stimulation; probably on its C-terminus.

It is found in the cytoplasm. The protein localises to the cytoskeleton. Its subcellular location is the cytoplasmic vesicle membrane. The protein resides in the synapse. It localises to the synaptosome. It is found in the cell junction. The protein localises to the focal adhesion. Adapter protein involved in regulating diverse signal transduction pathways. Involved in the regulation of endocytosis and lysosomal degradation of ligand-induced receptor tyrosine kinases, including EGFR and MET/hepatocyte growth factor receptor, through an association with CBL and endophilins. The association with CBL, and thus the receptor internalization, may be inhibited by an interaction with PDCD6IP and/or SPRY2. Involved in regulation of ligand-dependent endocytosis of the IgE receptor. Attenuates phosphatidylinositol 3-kinase activity by interaction with its regulatory subunit. May be involved in regulation of cell adhesion; promotes the interaction between TTK2B and PDCD6IP. May be involved in the regulation of cellular stress response via the MAPK pathways through its interaction with MAP3K4. Is involved in modulation of tumor necrosis factor mediated apoptosis. Plays a role in the regulation of cell morphology and cytoskeletal organization. Required in the control of cell shape and migration. Has an essential role in the stimulation of B cell activation. The polypeptide is SH3 domain-containing kinase-binding protein 1 (Sh3kbp1) (Mus musculus (Mouse)).